The primary structure comprises 147 residues: uncharacterized protein (147 aa).

2 helical membrane-spanning segments follow: residues 41-61 and 67-87; these read LANF…ALLI and LLAA…SFPL.

It is found in the cell membrane. This is an uncharacterized protein from Pyrococcus horikoshii (strain ATCC 700860 / DSM 12428 / JCM 9974 / NBRC 100139 / OT-3).